The following is a 314-amino-acid chain: Acetyl-coenzyme A carboxylase carboxyl transferase subunit beta (314 aa).

The CoA carboxyltransferase N-terminal domain occupies 37–307 (LWQKCPACDT…MSLPSIDSEA (271 aa)). Cys41, Cys44, Cys60, and Cys63 together coordinate Zn(2+). Residues 41-63 (CPACDTLTYTKDLQQNWQVCPSC) form a C4-type zinc finger.

It belongs to the AccD/PCCB family. Acetyl-CoA carboxylase is a heterohexamer composed of biotin carboxyl carrier protein (AccB), biotin carboxylase (AccC) and two subunits each of ACCase subunit alpha (AccA) and ACCase subunit beta (AccD). Requires Zn(2+) as cofactor.

Its subcellular location is the cytoplasm. It carries out the reaction N(6)-carboxybiotinyl-L-lysyl-[protein] + acetyl-CoA = N(6)-biotinyl-L-lysyl-[protein] + malonyl-CoA. It participates in lipid metabolism; malonyl-CoA biosynthesis; malonyl-CoA from acetyl-CoA: step 1/1. Its function is as follows. Component of the acetyl coenzyme A carboxylase (ACC) complex. Biotin carboxylase (BC) catalyzes the carboxylation of biotin on its carrier protein (BCCP) and then the CO(2) group is transferred by the transcarboxylase to acetyl-CoA to form malonyl-CoA. In Synechococcus sp. (strain JA-2-3B'a(2-13)) (Cyanobacteria bacterium Yellowstone B-Prime), this protein is Acetyl-coenzyme A carboxylase carboxyl transferase subunit beta.